We begin with the raw amino-acid sequence, 229 residues long: Peptidase E (229 aa).

Residues S120, D135, and H157 each act as charge relay system in the active site.

The protein belongs to the peptidase S51 family.

It is found in the cytoplasm. The catalysed reaction is Dipeptidase E catalyzes the hydrolysis of dipeptides Asp-|-Xaa. It does not act on peptides with N-terminal Glu, Asn or Gln, nor does it cleave isoaspartyl peptides.. Its function is as follows. Hydrolyzes dipeptides containing N-terminal aspartate residues. May play a role in allowing the cell to use peptide aspartate to spare carbon otherwise required for the synthesis of the aspartate family of amino acids. This chain is Peptidase E, found in Salmonella paratyphi A (strain AKU_12601).